Here is a 118-residue protein sequence, read N- to C-terminus: Large ribosomal subunit protein bL20 (118 aa).

This sequence belongs to the bacterial ribosomal protein bL20 family.

Binds directly to 23S ribosomal RNA and is necessary for the in vitro assembly process of the 50S ribosomal subunit. It is not involved in the protein synthesizing functions of that subunit. The sequence is that of Large ribosomal subunit protein bL20 from Protochlamydia amoebophila (strain UWE25).